We begin with the raw amino-acid sequence, 323 residues long: Lipid A biosynthesis myristoyltransferase (323 aa).

Residues 23 to 43 (YWGAWLGVAAMAGIALTPPKF) traverse the membrane as a helical segment. The short motif at 139 to 144 (HGWAVD) is the HXXXXD motif element.

It belongs to the LpxL/LpxM/LpxP family. LpxM subfamily.

The protein localises to the cell inner membrane. The catalysed reaction is alpha-Kdo-(2-&gt;4)-alpha-Kdo-(2-&gt;6)-(dodecanoyl)-lipid IVA (E. coli) + tetradecanoyl-[ACP] = alpha-Kdo-(2-&gt;4)-alpha-Kdo-(2-&gt;6)-lipid A (E. coli) + holo-[ACP]. It carries out the reaction (9Z)-hexadecenoyl-(Kdo)2-lipid IVA (E. coli) + tetradecanoyl-[ACP] = ((9Z)-hexadecenoyl-tetradecanoyl)-(Kdo)2-lipid A + holo-[ACP]. Its pathway is glycolipid biosynthesis; KDO(2)-lipid A biosynthesis; KDO(2)-lipid A from CMP-3-deoxy-D-manno-octulosonate and lipid IV(A): step 4/4. The protein operates within bacterial outer membrane biogenesis; lipopolysaccharide biosynthesis. Functionally, catalyzes the transfer of myristate from myristoyl-[acyl-carrier-protein] (ACP) to Kdo(2)-(lauroyl)-lipid IV(A) to form Kdo(2)-lipid A. Can probably also catalyze the transfer of myristate to Kdo(2)-(palmitoleoyl)-lipid IV(A) to form the cold-adapted Kdo(2)-lipid A. In vitro, can acylate Kdo(2)-lipid IV(A), but acylation of (KDO)2-(lauroyl)-lipid IV(A) is about 100 times faster. In vitro, can use lauroyl-ACP but displays a slight kinetic preference for myristoyl-ACP. In Escherichia coli (strain K12), this protein is Lipid A biosynthesis myristoyltransferase.